Here is a 320-residue protein sequence, read N- to C-terminus: Lipoyl synthase (320 aa).

7 residues coordinate [4Fe-4S] cluster: Cys-66, Cys-71, Cys-77, Cys-92, Cys-96, Cys-99, and Ser-306. Residues 77–295 (CFGHGTATFM…AEIGYAMGFS (219 aa)) form the Radical SAM core domain.

It belongs to the radical SAM superfamily. Lipoyl synthase family. Requires [4Fe-4S] cluster as cofactor.

It localises to the cytoplasm. The enzyme catalyses [[Fe-S] cluster scaffold protein carrying a second [4Fe-4S](2+) cluster] + N(6)-octanoyl-L-lysyl-[protein] + 2 oxidized [2Fe-2S]-[ferredoxin] + 2 S-adenosyl-L-methionine + 4 H(+) = [[Fe-S] cluster scaffold protein] + N(6)-[(R)-dihydrolipoyl]-L-lysyl-[protein] + 4 Fe(3+) + 2 hydrogen sulfide + 2 5'-deoxyadenosine + 2 L-methionine + 2 reduced [2Fe-2S]-[ferredoxin]. It functions in the pathway protein modification; protein lipoylation via endogenous pathway; protein N(6)-(lipoyl)lysine from octanoyl-[acyl-carrier-protein]: step 2/2. Catalyzes the radical-mediated insertion of two sulfur atoms into the C-6 and C-8 positions of the octanoyl moiety bound to the lipoyl domains of lipoate-dependent enzymes, thereby converting the octanoylated domains into lipoylated derivatives. This is Lipoyl synthase from Thioalkalivibrio sulfidiphilus (strain HL-EbGR7).